Here is an 847-residue protein sequence, read N- to C-terminus: DNA ligase (847 aa).

Over residues 1-22 (MSDTTTGSDAADAAVPATTPAD) the composition is skewed to low complexity. A disordered region spans residues 1-23 (MSDTTTGSDAADAAVPATTPADL). Residues 54–58 (DAEYD), 104–105 (SL), and glutamate 135 contribute to the NAD(+) site. The active-site N6-AMP-lysine intermediate is the lysine 137. Residues arginine 158, glutamate 195, lysine 326, and lysine 350 each coordinate NAD(+). Zn(2+) contacts are provided by cysteine 444, cysteine 447, cysteine 463, and cysteine 469. Positions 686–775 (AAGGVLAGLA…PDAIALPEAD (90 aa)) constitute a BRCT domain. A disordered region spans residues 770–847 (ALPEADPVPD…AEPDGPAETP (78 aa)). Low complexity-rich tracts occupy residues 786–807 (DGGS…ATAE) and 819–833 (PAAA…VEAG).

This sequence belongs to the NAD-dependent DNA ligase family. LigA subfamily. It depends on Mg(2+) as a cofactor. Mn(2+) is required as a cofactor.

It catalyses the reaction NAD(+) + (deoxyribonucleotide)n-3'-hydroxyl + 5'-phospho-(deoxyribonucleotide)m = (deoxyribonucleotide)n+m + AMP + beta-nicotinamide D-nucleotide.. DNA ligase that catalyzes the formation of phosphodiester linkages between 5'-phosphoryl and 3'-hydroxyl groups in double-stranded DNA using NAD as a coenzyme and as the energy source for the reaction. It is essential for DNA replication and repair of damaged DNA. In Clavibacter sepedonicus (Clavibacter michiganensis subsp. sepedonicus), this protein is DNA ligase.